The sequence spans 189 residues: uncharacterized protein (189 aa).

4 helical membrane passes run 35–55 (IIWY…AVMK), 97–117 (GVLQ…ALHF), 123–143 (WLLF…YEWT), and 144–164 (GNLF…ACQI).

It is found in the cell membrane. This is an uncharacterized protein from Bacillus subtilis (strain 168).